We begin with the raw amino-acid sequence, 570 residues long: Fibropellin-3 (570 aa).

Positions 1–17 are cleaved as a signal peptide; sequence MKVSLLAVLLLSIVAAT. In terms of domain architecture, EGF-like 1 spans 18-55; sequence YGQGECGSNPCENGSVCRDGEGTYICECQMGYDGQNCD. Disulfide bonds link C23–C34, C28–C43, C45–C54, and C62–C88. N30 carries N-linked (GlcNAc...) asparagine glycosylation. Residues 62 to 175 enclose the CUB domain; it reads CGYNIFESTG…RKGFRITFSS (114 aa). N136 carries N-linked (GlcNAc...) asparagine glycosylation. The EGF-like 2; calcium-binding domain occupies 176–212; it reads DGDDCTPNPCLNGATCVDQVNDYQCICAPGFTGDNCE. 22 disulfide bridges follow: C180–C191, C185–C200, C202–C211, C218–C229, C223–C238, C240–C249, C256–C267, C261–C276, C278–C287, C294–C305, C299–C314, C316–C325, C332–C343, C337–C352, C354–C363, C370–C381, C375–C390, C392–C401, C408–C419, C413–C428, C430–C439, and C445–C521. One can recognise an EGF-like 3; calcium-binding domain in the interval 214 to 250; sequence DIDECASAPCRNGGACVDQVNGYTCNCIPGFNGVNCE. Residues 252–288 form the EGF-like 4; calcium-binding domain; the sequence is NINECASIPCLNGGICVDGINQFACTCLPGYTGILCE. The 37-residue stretch at 290–326 folds into the EGF-like 5; calcium-binding domain; it reads DINECASSPCQNGGSCTDAVNRYTCDCRAGFTGSNCE. An EGF-like 6; calcium-binding domain is found at 328–364; the sequence is NINECASSPCLNGGSCLDGVDGYVCQCLPNYTGTHCE. N-linked (GlcNAc...) asparagine glycosylation occurs at N357. In terms of domain architecture, EGF-like 7 spans 366–402; sequence SLDACASLPCQNGGVCTNVGGDYVCECLPGYTGINCE. In terms of domain architecture, EGF-like 8; calcium-binding spans 404-440; sequence DINECASLPCQNGGECINGIAMYICQCRQGYAGVNCE. The 120-residue stretch at 443–562 folds into the Avidin-like domain; that stretch reads GFCDLEGVWF…GQDKWTRYEQ (120 aa).

In terms of assembly, homotetramer.

It is found in the secreted. Its subcellular location is the extracellular space. Forms the apical lamina, a component of the extracellular matrix. In Strongylocentrotus purpuratus (Purple sea urchin), this protein is Fibropellin-3 (EGF3).